A 583-amino-acid chain; its full sequence is COP9 signalosome complex subunit 10 (583 aa).

Residues 1–35 (MSDEEDYAEYMMSEEDMSSFEMDVDSDVEPDDAGL) show a composition bias toward acidic residues. Residues 1 to 55 (MSDEEDYAEYMMSEEDMSSFEMDVDSDVEPDDAGLEQDQQVTGDDYDGSAGNSGD) are disordered. Residues 297 to 485 (DHYNQSQMLS…DYVYFGEEYF (189 aa)) form the PCI domain.

As to quaternary structure, component of a COP9 signalosome-like (CSN) complex.

The protein resides in the cytoplasm. The protein localises to the nucleus. Its function is as follows. Component of the COP9 signalosome (CSN) complex that acts as an regulator of the ubiquitin (Ubl) conjugation pathway by mediating the deneddylation of the cullin subunit of SCF-type E3 ubiquitin-protein ligase complexes. The CSN complex is involved in the regulation of the mating pheromone response. The polypeptide is COP9 signalosome complex subunit 10 (RRI2) (Kluyveromyces lactis (strain ATCC 8585 / CBS 2359 / DSM 70799 / NBRC 1267 / NRRL Y-1140 / WM37) (Yeast)).